We begin with the raw amino-acid sequence, 323 residues long: Thymidine kinase (323 aa).

ATP is bound at residue 11–18 (GPHGLGKT). The Proton acceptor role is filled by Glu36. Substrate-binding residues include Tyr54 and Gln78. Arg169 is an ATP binding site. Substrate is bound at residue Arg175.

This sequence belongs to the herpesviridae thymidine kinase family. As to quaternary structure, homodimer.

It carries out the reaction thymidine + ATP = dTMP + ADP + H(+). In terms of biological role, catalyzes the transfer of the gamma-phospho group of ATP to thymidine to generate dTMP in the salvage pathway of pyrimidine synthesis. The dTMP serves as a substrate for DNA polymerase during viral DNA replication. Allows the virus to be reactivated and to grow in non-proliferative cells lacking a high concentration of phosphorylated nucleic acid precursors. The polypeptide is Thymidine kinase (Bos taurus (Bovine)).